The chain runs to 343 residues: N-acetyl-gamma-glutamyl-phosphate reductase (343 aa).

Residue cysteine 149 is part of the active site.

It belongs to the NAGSA dehydrogenase family. Type 1 subfamily.

The protein localises to the cytoplasm. It catalyses the reaction N-acetyl-L-glutamate 5-semialdehyde + phosphate + NADP(+) = N-acetyl-L-glutamyl 5-phosphate + NADPH + H(+). The protein operates within amino-acid biosynthesis; L-arginine biosynthesis; N(2)-acetyl-L-ornithine from L-glutamate: step 3/4. Its function is as follows. Catalyzes the NADPH-dependent reduction of N-acetyl-5-glutamyl phosphate to yield N-acetyl-L-glutamate 5-semialdehyde. The protein is N-acetyl-gamma-glutamyl-phosphate reductase of Alkalilimnicola ehrlichii (strain ATCC BAA-1101 / DSM 17681 / MLHE-1).